A 228-amino-acid chain; its full sequence is Cytochrome c oxidase subunit 2 (228 aa).

The Mitochondrial intermembrane portion of the chain corresponds to 1 to 14 (MPHASQLSLQEAMG). The helical transmembrane segment at 15–45 (PTMEEVIFLHDHVLLLTCLMTMVITMFTLTA) threads the bilayer. Residues 46 to 59 (TTTALTHNDPTEEV) are Mitochondrial matrix-facing. The chain crosses the membrane as a helical span at residues 60-87 (EQLEAAWTVAPIMILILTALPSVRSLYL). Residues 88-228 (MEEVFNPYLT…HFEQWLISEQ (141 aa)) lie on the Mitochondrial intermembrane side of the membrane. The Cu cation site is built by H162, C197, E199, C201, H205, and M208. Residue E199 coordinates Mg(2+).

This sequence belongs to the cytochrome c oxidase subunit 2 family. Component of the cytochrome c oxidase (complex IV, CIV), a multisubunit enzyme composed of 14 subunits. The complex is composed of a catalytic core of 3 subunits MT-CO1, MT-CO2 and MT-CO3, encoded in the mitochondrial DNA, and 11 supernumerary subunits COX4I, COX5A, COX5B, COX6A, COX6B, COX6C, COX7A, COX7B, COX7C, COX8 and NDUFA4, which are encoded in the nuclear genome. The complex exists as a monomer or a dimer and forms supercomplexes (SCs) in the inner mitochondrial membrane with NADH-ubiquinone oxidoreductase (complex I, CI) and ubiquinol-cytochrome c oxidoreductase (cytochrome b-c1 complex, complex III, CIII), resulting in different assemblies (supercomplex SCI(1)III(2)IV(1) and megacomplex MCI(2)III(2)IV(2)). Found in a complex with TMEM177, COA6, COX18, COX20, SCO1 and SCO2. Interacts with TMEM177 in a COX20-dependent manner. Interacts with COX20. Interacts with COX16. The cofactor is Cu cation.

It is found in the mitochondrion inner membrane. The enzyme catalyses 4 Fe(II)-[cytochrome c] + O2 + 8 H(+)(in) = 4 Fe(III)-[cytochrome c] + 2 H2O + 4 H(+)(out). In terms of biological role, component of the cytochrome c oxidase, the last enzyme in the mitochondrial electron transport chain which drives oxidative phosphorylation. The respiratory chain contains 3 multisubunit complexes succinate dehydrogenase (complex II, CII), ubiquinol-cytochrome c oxidoreductase (cytochrome b-c1 complex, complex III, CIII) and cytochrome c oxidase (complex IV, CIV), that cooperate to transfer electrons derived from NADH and succinate to molecular oxygen, creating an electrochemical gradient over the inner membrane that drives transmembrane transport and the ATP synthase. Cytochrome c oxidase is the component of the respiratory chain that catalyzes the reduction of oxygen to water. Electrons originating from reduced cytochrome c in the intermembrane space (IMS) are transferred via the dinuclear copper A center (CU(A)) of subunit 2 and heme A of subunit 1 to the active site in subunit 1, a binuclear center (BNC) formed by heme A3 and copper B (CU(B)). The BNC reduces molecular oxygen to 2 water molecules using 4 electrons from cytochrome c in the IMS and 4 protons from the mitochondrial matrix. The protein is Cytochrome c oxidase subunit 2 (MT-CO2) of Lycodon semicarinatus (Ryukyu odd-tooth snake).